Consider the following 264-residue polypeptide: S-adenosylmethionine decarboxylase proenzyme (264 aa).

Catalysis depends on serine 113, which acts as the Schiff-base intermediate with substrate; via pyruvic acid. Residue serine 113 is modified to Pyruvic acid (Ser); by autocatalysis. The active-site Proton acceptor; for processing activity is histidine 118. Cysteine 141 serves as the catalytic Proton donor; for catalytic activity.

The protein belongs to the prokaryotic AdoMetDC family. Type 2 subfamily. In terms of assembly, heterooctamer of four alpha and four beta chains arranged as a tetramer of alpha/beta heterodimers. It depends on pyruvate as a cofactor. Post-translationally, is synthesized initially as an inactive proenzyme. Formation of the active enzyme involves a self-maturation process in which the active site pyruvoyl group is generated from an internal serine residue via an autocatalytic post-translational modification. Two non-identical subunits are generated from the proenzyme in this reaction, and the pyruvate is formed at the N-terminus of the alpha chain, which is derived from the carboxyl end of the proenzyme. The post-translation cleavage follows an unusual pathway, termed non-hydrolytic serinolysis, in which the side chain hydroxyl group of the serine supplies its oxygen atom to form the C-terminus of the beta chain, while the remainder of the serine residue undergoes an oxidative deamination to produce ammonia and the pyruvoyl group blocking the N-terminus of the alpha chain.

The enzyme catalyses S-adenosyl-L-methionine + H(+) = S-adenosyl 3-(methylsulfanyl)propylamine + CO2. It functions in the pathway amine and polyamine biosynthesis; S-adenosylmethioninamine biosynthesis; S-adenosylmethioninamine from S-adenosyl-L-methionine: step 1/1. Catalyzes the decarboxylation of S-adenosylmethionine to S-adenosylmethioninamine (dcAdoMet), the propylamine donor required for the synthesis of the polyamines spermine and spermidine from the diamine putrescine. This chain is S-adenosylmethionine decarboxylase proenzyme, found in Xylella fastidiosa (strain 9a5c).